The primary structure comprises 466 residues: 23S rRNA (uracil(1939)-C(5))-methyltransferase RlmD (466 aa).

The TRAM domain maps to 1–54 (MVDVLNIESLDLEARGIAHRDGKVLFVEGALPGERVTVQTVRRKPSYEIAKVEE). Cysteine 67, cysteine 73, cysteine 76, and cysteine 155 together coordinate [4Fe-4S] cluster. S-adenosyl-L-methionine contacts are provided by glutamine 264, phenylalanine 293, asparagine 298, glutamate 314, asparagine 342, and aspartate 363. Cysteine 393 acts as the Nucleophile in catalysis.

It belongs to the class I-like SAM-binding methyltransferase superfamily. RNA M5U methyltransferase family. RlmD subfamily.

The catalysed reaction is uridine(1939) in 23S rRNA + S-adenosyl-L-methionine = 5-methyluridine(1939) in 23S rRNA + S-adenosyl-L-homocysteine + H(+). Catalyzes the formation of 5-methyl-uridine at position 1939 (m5U1939) in 23S rRNA. In Bordetella pertussis (strain Tohama I / ATCC BAA-589 / NCTC 13251), this protein is 23S rRNA (uracil(1939)-C(5))-methyltransferase RlmD.